The primary structure comprises 210 residues: ATP-dependent Clp protease proteolytic subunit (210 aa).

The active-site Nucleophile is the Ser113. Residue His138 is part of the active site.

It belongs to the peptidase S14 family. In terms of assembly, fourteen ClpP subunits assemble into 2 heptameric rings which stack back to back to give a disk-like structure with a central cavity, resembling the structure of eukaryotic proteasomes.

Its subcellular location is the cytoplasm. It catalyses the reaction Hydrolysis of proteins to small peptides in the presence of ATP and magnesium. alpha-casein is the usual test substrate. In the absence of ATP, only oligopeptides shorter than five residues are hydrolyzed (such as succinyl-Leu-Tyr-|-NHMec, and Leu-Tyr-Leu-|-Tyr-Trp, in which cleavage of the -Tyr-|-Leu- and -Tyr-|-Trp bonds also occurs).. Cleaves peptides in various proteins in a process that requires ATP hydrolysis. Has a chymotrypsin-like activity. Plays a major role in the degradation of misfolded proteins. This chain is ATP-dependent Clp protease proteolytic subunit, found in Marinomonas sp. (strain MWYL1).